The primary structure comprises 273 residues: Pantothenate synthetase (273 aa).

27 to 34 (MGALHEGH) is a binding site for ATP. His-34 (proton donor) is an active-site residue. Residue Gln-58 coordinates (R)-pantoate. Residue Gln-58 coordinates beta-alanine. An ATP-binding site is contributed by 144–147 (GKKD). Gln-150 serves as a coordination point for (R)-pantoate. Residues Val-173 and 181–184 (LSSR) each bind ATP.

The protein belongs to the pantothenate synthetase family. As to quaternary structure, homodimer.

It localises to the cytoplasm. The catalysed reaction is (R)-pantoate + beta-alanine + ATP = (R)-pantothenate + AMP + diphosphate + H(+). The protein operates within cofactor biosynthesis; (R)-pantothenate biosynthesis; (R)-pantothenate from (R)-pantoate and beta-alanine: step 1/1. Catalyzes the condensation of pantoate with beta-alanine in an ATP-dependent reaction via a pantoyl-adenylate intermediate. The sequence is that of Pantothenate synthetase from Sulfurimonas denitrificans (strain ATCC 33889 / DSM 1251) (Thiomicrospira denitrificans (strain ATCC 33889 / DSM 1251)).